The chain runs to 179 residues: Large ribosomal subunit protein uL5 (179 aa).

The protein belongs to the universal ribosomal protein uL5 family. As to quaternary structure, part of the 50S ribosomal subunit; part of the 5S rRNA/L5/L18/L25 subcomplex. Contacts the 5S rRNA and the P site tRNA. Forms a bridge to the 30S subunit in the 70S ribosome.

In terms of biological role, this is one of the proteins that bind and probably mediate the attachment of the 5S RNA into the large ribosomal subunit, where it forms part of the central protuberance. In the 70S ribosome it contacts protein S13 of the 30S subunit (bridge B1b), connecting the 2 subunits; this bridge is implicated in subunit movement. Contacts the P site tRNA; the 5S rRNA and some of its associated proteins might help stabilize positioning of ribosome-bound tRNAs. This is Large ribosomal subunit protein uL5 from Shewanella sp. (strain ANA-3).